A 161-amino-acid chain; its full sequence is ATP synthase subunit b (161 aa).

Residues 1-21 (MYLNATILGQVIAFILFVWFC) form a helical membrane-spanning segment.

It belongs to the ATPase B chain family. F-type ATPases have 2 components, F(1) - the catalytic core - and F(0) - the membrane proton channel. F(1) has five subunits: alpha(3), beta(3), gamma(1), delta(1), epsilon(1). F(0) has three main subunits: a(1), b(2) and c(10-14). The alpha and beta chains form an alternating ring which encloses part of the gamma chain. F(1) is attached to F(0) by a central stalk formed by the gamma and epsilon chains, while a peripheral stalk is formed by the delta and b chains.

It localises to the cell inner membrane. Functionally, f(1)F(0) ATP synthase produces ATP from ADP in the presence of a proton or sodium gradient. F-type ATPases consist of two structural domains, F(1) containing the extramembraneous catalytic core and F(0) containing the membrane proton channel, linked together by a central stalk and a peripheral stalk. During catalysis, ATP synthesis in the catalytic domain of F(1) is coupled via a rotary mechanism of the central stalk subunits to proton translocation. Component of the F(0) channel, it forms part of the peripheral stalk, linking F(1) to F(0). This chain is ATP synthase subunit b, found in Blochmanniella floridana.